The primary structure comprises 329 residues: ATP-dependent (S)-NAD(P)H-hydrate dehydratase (329 aa).

The 292-residue stretch at 35-326 (TLQLVRNIIP…AEVGAAFSKL (292 aa)) folds into the YjeF C-terminal domain. Y67 carries the phosphotyrosine modification. Residues G135 and 188-194 (NHMEFSR) each bind (6S)-NADPHX. 2 N-linked (GlcNAc...) asparagine glycosylation sites follow: N207 and N222. ATP is bound by residues 228–232 (KGERD) and 247–256 (GSSRRCGGQG). D257 contributes to the (6S)-NADPHX binding site. An N-linked (GlcNAc...) asparagine glycan is attached at N279.

Belongs to the NnrD/CARKD family. Mg(2+) serves as cofactor.

Its subcellular location is the mitochondrion. The catalysed reaction is (6S)-NADHX + ATP = ADP + phosphate + NADH + H(+). The enzyme catalyses (6S)-NADPHX + ATP = ADP + phosphate + NADPH + H(+). In terms of biological role, catalyzes the dehydration of the S-form of NAD(P)HX at the expense of ATP, which is converted to ADP. Together with NAD(P)HX epimerase, which catalyzes the epimerization of the S- and R-forms, the enzyme allows the repair of both epimers of NAD(P)HX, a damaged form of NAD(P)H that is a result of enzymatic or heat-dependent hydration. This Pongo abelii (Sumatran orangutan) protein is ATP-dependent (S)-NAD(P)H-hydrate dehydratase.